Consider the following 514-residue polypeptide: Cytidine and dCMP deaminase domain-containing protein 1 (514 aa).

2 stretches are compositionally biased toward polar residues: residues 1-11 (MKEAGQMQNLE) and 18-27 (SVSTQTGSMT). 2 disordered regions span residues 1–27 (MKEA…GSMT) and 55–83 (RQKS…TDKR). Residues 59–83 (QKNEEGKHGPLGDNEERTRVSTDKR) show a composition bias toward basic and acidic residues. Residues 70–168 (GDNEERTRVS…SLLTEASSSE (99 aa)) enclose the CMP/dCMP-type deaminase 1 domain. Zn(2+)-binding residues include H109, C134, and C137. Positions 271 to 283 (NLRQNMKDLILLL) match the Nuclear export signal motif. The 166-residue stretch at 317 to 482 (EIARHCMVQA…LNPSGAYGLE (166 aa)) folds into the CMP/dCMP-type deaminase 2 domain. H398 contributes to the Zn(2+) binding site. Catalysis depends on E400, which acts as the Proton donor. Positions 426 and 429 each coordinate Zn(2+). Residues 480 to 514 (GLEQNEPERRENGVLRPVPQKEEQHQDKKLRLGIH) form a disordered region. A compositionally biased stretch (basic and acidic residues) spans 485-514 (EPERRENGVLRPVPQKEEQHQDKKLRLGIH). The Bipartite nuclear localization signal motif lies at 488–510 (RRENGVLRPVPQKEEQHQDKKLR).

It belongs to the cytidine and deoxycytidylate deaminase family. Zn(2+) serves as cofactor. In terms of tissue distribution, widely expressed. Expressed at high levels in the testis.

It localises to the cytoplasm. Its subcellular location is the nucleus. The catalysed reaction is 2'-deoxycytidine + H2O + H(+) = 2'-deoxyuridine + NH4(+). It carries out the reaction cytidine + H2O + H(+) = uridine + NH4(+). Catalyzes the deamination of cytidine and deoxycytidine into uridine and deoxyuridine, respectively. May play an important role in testicular development and spermatogenesis. In Homo sapiens (Human), this protein is Cytidine and dCMP deaminase domain-containing protein 1 (CDADC1).